Consider the following 549-residue polypeptide: Protein EPD1 (549 aa).

An N-terminal signal peptide occupies residues 1 to 22 (MLLNSLFPSILAAATFVTSAAA). Residues Asn40 and Asn59 are each glycosylated (N-linked (GlcNAc...) asparagine). Cys72 and Cys101 are disulfide-bonded. Asn147 and Asn163 each carry an N-linked (GlcNAc...) asparagine glycan. 5 disulfide bridges follow: Cys214/Cys347, Cys232/Cys263, Cys369/Cys420, Cys378/Cys444, and Cys397/Cys402. The segment covering 336–356 (AESASGVSRTSCPTNTDNWEA) has biased composition (polar residues). A disordered region spans residues 336 to 361 (AESASGVSRTSCPTNTDNWEASTELP). A glycan (N-linked (GlcNAc...) asparagine) is linked at Asn383. 2 N-linked (GlcNAc...) asparagine glycosylation sites follow: Asn408 and Asn438. A disordered region spans residues 479-519 (SVRTDTSEATTDSGSGSSNSGSASSSKSTSSSTSSGSSGSK). Low complexity predominate over residues 487 to 519 (ATTDSGSGSSNSGSASSSKSTSSSTSSGSSGSK).

Belongs to the glycosyl hydrolase 72 family.

It localises to the cell membrane. This is Protein EPD1 (EPD1) from Candida maltosa (Yeast).